The primary structure comprises 405 residues: Tryptophan synthase beta chain (405 aa).

K98 is subject to N6-(pyridoxal phosphate)lysine.

It belongs to the TrpB family. In terms of assembly, tetramer of two alpha and two beta chains. The cofactor is pyridoxal 5'-phosphate.

It carries out the reaction (1S,2R)-1-C-(indol-3-yl)glycerol 3-phosphate + L-serine = D-glyceraldehyde 3-phosphate + L-tryptophan + H2O. Its pathway is amino-acid biosynthesis; L-tryptophan biosynthesis; L-tryptophan from chorismate: step 5/5. In terms of biological role, the beta subunit is responsible for the synthesis of L-tryptophan from indole and L-serine. This Stenotrophomonas maltophilia (strain R551-3) protein is Tryptophan synthase beta chain.